We begin with the raw amino-acid sequence, 310 residues long: Putative S-adenosyl-L-methionine-dependent methyltransferase MMAR_0357 (310 aa).

S-adenosyl-L-methionine contacts are provided by residues Asp-132 and 161–162 (DL).

The protein belongs to the UPF0677 family.

Its function is as follows. Exhibits S-adenosyl-L-methionine-dependent methyltransferase activity. This is Putative S-adenosyl-L-methionine-dependent methyltransferase MMAR_0357 from Mycobacterium marinum (strain ATCC BAA-535 / M).